Consider the following 245-residue polypeptide: MTTPTTVAGVDLPDLQPARELPARPEPLRMKPGETALVVVDMQNAYASLGGYLDLAGFDVSSTGPVIANINKACAAARAAGIPVIFFQNGWDPAYVEAGGPGSPNWHKSNALKTMRKRPELEGQLLAKGGWDYQLVDELTPQPGDIVVPKIRYSGFFNSSFDSVLRSRGIRNLVFTGIATNVCVESTLRDGFHLEYFGVVLADATHQAGPEFAQQAALFNIETFFGWVSSVDDFCTTFSPVGQPS.

The active-site Proton acceptor is Asp-41. Residue Lys-150 is part of the active site. Cys-183 acts as the Nucleophile in catalysis.

Belongs to the isochorismatase family. RutB subfamily.

It carries out the reaction (Z)-3-ureidoacrylate + H2O + H(+) = (Z)-3-aminoacrylate + NH4(+) + CO2. The enzyme catalyses (Z)-3-ureidoacrylate + H2O = (Z)-3-aminoacrylate + carbamate + H(+). It catalyses the reaction (Z)-2-methylureidoacrylate + H2O + H(+) = (Z)-2-methylaminoacrylate + NH4(+) + CO2. Hydrolyzes ureidoacrylate to form aminoacrylate and carbamate. The carbamate hydrolyzes spontaneously, thereby releasing one of the nitrogen atoms of the pyrimidine ring as ammonia and one of its carbon atoms as CO2. The sequence is that of Ureidoacrylate amidohydrolase RutB from Pseudomonas syringae pv. syringae (strain B728a).